Here is a 222-residue protein sequence, read N- to C-terminus: Uridine diphosphate glucose pyrophosphatase NUDT14 (222 aa).

The 169-residue stretch at 38–206 (KTHDSVTVLL…DIPKTLGVIF (169 aa)) folds into the Nudix hydrolase domain. The short motif at 111 to 129 (PGLSLEEVACKEAWEECGY) is the Nudix box element.

This sequence belongs to the Nudix hydrolase family. As to quaternary structure, homodimer. Mg(2+) is required as a cofactor.

The protein resides in the cytoplasm. It catalyses the reaction UDP-sugar + H2O = UMP + alpha-D-aldose 1-phosphate.. Functionally, hydrolyzes UDP-glucose to glucose 1-phosphate and UMP and ADP-ribose to ribose 5-phosphate and AMP. The physiological substrate is probably UDP-glucose. Poor activity on other substrates such as ADP-glucose, CDP-glucose, GDP-glucose and GDP-mannose. This Homo sapiens (Human) protein is Uridine diphosphate glucose pyrophosphatase NUDT14 (NUDT14).